A 255-amino-acid chain; its full sequence is Imidazole glycerol phosphate synthase subunit HisF (255 aa).

Active-site residues include Asp-12 and Asp-131.

Belongs to the HisA/HisF family. As to quaternary structure, heterodimer of HisH and HisF.

It is found in the cytoplasm. It catalyses the reaction 5-[(5-phospho-1-deoxy-D-ribulos-1-ylimino)methylamino]-1-(5-phospho-beta-D-ribosyl)imidazole-4-carboxamide + L-glutamine = D-erythro-1-(imidazol-4-yl)glycerol 3-phosphate + 5-amino-1-(5-phospho-beta-D-ribosyl)imidazole-4-carboxamide + L-glutamate + H(+). It functions in the pathway amino-acid biosynthesis; L-histidine biosynthesis; L-histidine from 5-phospho-alpha-D-ribose 1-diphosphate: step 5/9. IGPS catalyzes the conversion of PRFAR and glutamine to IGP, AICAR and glutamate. The HisF subunit catalyzes the cyclization activity that produces IGP and AICAR from PRFAR using the ammonia provided by the HisH subunit. This Neisseria gonorrhoeae (strain ATCC 700825 / FA 1090) protein is Imidazole glycerol phosphate synthase subunit HisF.